We begin with the raw amino-acid sequence, 290 residues long: Bifunctional protein FolD (290 aa).

Residues 165 to 167 (GRS), Ser-190, and Ile-231 contribute to the NADP(+) site.

Belongs to the tetrahydrofolate dehydrogenase/cyclohydrolase family. In terms of assembly, homodimer.

The enzyme catalyses (6R)-5,10-methylene-5,6,7,8-tetrahydrofolate + NADP(+) = (6R)-5,10-methenyltetrahydrofolate + NADPH. The catalysed reaction is (6R)-5,10-methenyltetrahydrofolate + H2O = (6R)-10-formyltetrahydrofolate + H(+). It functions in the pathway one-carbon metabolism; tetrahydrofolate interconversion. Catalyzes the oxidation of 5,10-methylenetetrahydrofolate to 5,10-methenyltetrahydrofolate and then the hydrolysis of 5,10-methenyltetrahydrofolate to 10-formyltetrahydrofolate. The polypeptide is Bifunctional protein FolD (Aromatoleum aromaticum (strain DSM 19018 / LMG 30748 / EbN1) (Azoarcus sp. (strain EbN1))).